A 196-amino-acid polypeptide reads, in one-letter code: Probable thymidylate kinase (196 aa).

ATP is bound at residue 7-14 (GIDGAGKT).

This sequence belongs to the thymidylate kinase family.

The catalysed reaction is dTMP + ATP = dTDP + ADP. The polypeptide is Probable thymidylate kinase (tmk) (Archaeoglobus fulgidus (strain ATCC 49558 / DSM 4304 / JCM 9628 / NBRC 100126 / VC-16)).